The chain runs to 362 residues: tRNA N6-adenosine threonylcarbamoyltransferase (362 aa).

Fe cation-binding residues include His-120 and His-124. Residues 142–146 (LASGG), Asp-175, Gly-188, and Asn-288 each bind substrate. Asp-316 is a Fe cation binding site. A compositionally biased stretch (basic and acidic residues) spans 342 to 351 (RPRWPLDPDA). The segment at 342 to 362 (RPRWPLDPDAPKAAGAGGVKA) is disordered.

It belongs to the KAE1 / TsaD family. The cofactor is Fe(2+).

The protein localises to the cytoplasm. It catalyses the reaction L-threonylcarbamoyladenylate + adenosine(37) in tRNA = N(6)-L-threonylcarbamoyladenosine(37) in tRNA + AMP + H(+). Its function is as follows. Required for the formation of a threonylcarbamoyl group on adenosine at position 37 (t(6)A37) in tRNAs that read codons beginning with adenine. Is involved in the transfer of the threonylcarbamoyl moiety of threonylcarbamoyl-AMP (TC-AMP) to the N6 group of A37, together with TsaE and TsaB. TsaD likely plays a direct catalytic role in this reaction. This is tRNA N6-adenosine threonylcarbamoyltransferase from Rhodospirillum rubrum (strain ATCC 11170 / ATH 1.1.1 / DSM 467 / LMG 4362 / NCIMB 8255 / S1).